We begin with the raw amino-acid sequence, 101 residues long: Small ribosomal subunit protein uS10 (101 aa).

It belongs to the universal ribosomal protein uS10 family. In terms of assembly, part of the 30S ribosomal subunit.

In terms of biological role, involved in the binding of tRNA to the ribosomes. The protein is Small ribosomal subunit protein uS10 of Porphyromonas gingivalis (strain ATCC 33277 / DSM 20709 / CIP 103683 / JCM 12257 / NCTC 11834 / 2561).